Here is a 345-residue protein sequence, read N- to C-terminus: Phosphoribosylformylglycinamidine cyclo-ligase (345 aa).

This sequence belongs to the AIR synthase family.

It localises to the cytoplasm. It catalyses the reaction 2-formamido-N(1)-(5-O-phospho-beta-D-ribosyl)acetamidine + ATP = 5-amino-1-(5-phospho-beta-D-ribosyl)imidazole + ADP + phosphate + H(+). Its pathway is purine metabolism; IMP biosynthesis via de novo pathway; 5-amino-1-(5-phospho-D-ribosyl)imidazole from N(2)-formyl-N(1)-(5-phospho-D-ribosyl)glycinamide: step 2/2. This Synechococcus sp. (strain CC9902) protein is Phosphoribosylformylglycinamidine cyclo-ligase.